An 815-amino-acid polypeptide reads, in one-letter code: uncharacterized protein (815 aa).

Positions 1 to 21 (MNIYRLSFVSCLVMAMPCAMA) are cleaved as a signal peptide. Cysteines 795 and 814 form a disulfide.

Belongs to the fimbrial export usher family.

It is found in the cell outer membrane. In terms of biological role, could be involved in the export and assembly of the putative YbgD fimbrial subunit across the outer membrane. This is an uncharacterized protein from Escherichia coli (strain K12).